The sequence spans 236 residues: MSVNGNLRSLIDMLEAAQDGHMIKIALRSFAHSCGYDRFAYLQKDGTQVRTFHSYPGPWESIYLGSDYFNIDPVLAEAKRRRDVFFWTADAWPARGSSPLRRFRDEAISHGIRCGVTIPVEGSYGSAMMLTFASPERKVDISGVLDPKKAVQLLMMVHYQLKIIAAKTVLNPKQMLSPREMLCLVWASKGKTASVTANLTGINARTVQHYLDKARAKLDAESVPQLVAIAKDRGLV.

Residues 169–234 (VLNPKQMLSP…QLVAIAKDRG (66 aa)) form the HTH luxR-type domain. The H-T-H motif DNA-binding region spans 193 to 212 (ASVTANLTGINARTVQHYLD).

It belongs to the autoinducer-regulated transcriptional regulatory protein family.

Functionally, positive regulation of conjugal transfer. TraR activates target genes in the presence of AAI and also activates traR and traI themselves. The polypeptide is Probable transcriptional activator protein TraR (traR) (Sinorhizobium fredii (strain NBRC 101917 / NGR234)).